Reading from the N-terminus, the 285-residue chain is Foldase protein PrsA 2 (285 aa).

Positions 1-20 (MRGKHIFIITALISILMLSA) are cleaved as a signal peptide. Cys-21 carries N-palmitoyl cysteine lipidation. Residue Cys-21 is the site of S-diacylglycerol cysteine attachment. The PpiC domain maps to 134 to 224 (KPEIKASHIL…NGYHVIKLTD (91 aa)).

This sequence belongs to the PrsA family.

The protein localises to the cell membrane. It carries out the reaction [protein]-peptidylproline (omega=180) = [protein]-peptidylproline (omega=0). In terms of biological role, plays a major role in protein secretion by helping the post-translocational extracellular folding of several secreted proteins. This Bacillus cereus (strain ATCC 14579 / DSM 31 / CCUG 7414 / JCM 2152 / NBRC 15305 / NCIMB 9373 / NCTC 2599 / NRRL B-3711) protein is Foldase protein PrsA 2 (prsA2).